Here is a 430-residue protein sequence, read N- to C-terminus: Asparagine--tRNA ligase (430 aa).

It belongs to the class-II aminoacyl-tRNA synthetase family. As to quaternary structure, homodimer.

It localises to the cytoplasm. It catalyses the reaction tRNA(Asn) + L-asparagine + ATP = L-asparaginyl-tRNA(Asn) + AMP + diphosphate + H(+). The sequence is that of Asparagine--tRNA ligase from Staphylococcus aureus (strain MW2).